The chain runs to 660 residues: Long chain acyl-CoA synthetase 1 (660 aa).

225–236 serves as a coordination point for ATP; that stretch reads IMYTSGTSGDPK. The interval 492–516 is fatty acid-binding; that stretch reads DGWFHTGDIGEILPNGVLKIIDRKK.

It belongs to the ATP-dependent AMP-binding enzyme family. It depends on Mg(2+) as a cofactor. In terms of tissue distribution, epidermal-specific expression along the entire stem. In cauline leaves, was expressed over the entire leaf surface, most strongly in trichomes and guard cells, but not in mesophyll cells. In flowers, the expression was detected in the stigma and filaments of the stamens, and in the carpel was expressed specifically in ovaries. In roots, was expressed in primary and lateral roots, but not in the root tips.

It localises to the endoplasmic reticulum. It catalyses the reaction a long-chain fatty acid + ATP + CoA = a long-chain fatty acyl-CoA + AMP + diphosphate. It participates in lipid metabolism; fatty acid metabolism. In terms of biological role, activation of long-chain fatty acids for both synthesis of cellular lipids, and degradation via beta-oxidation. Acts in both the wax and cutin pathways. Preferentially uses palmitate, palmitoleate, linoleate and eicosenoate. Seems to have a specific activity against very long-chain fatty acid (VLCFA) class with acids longer than 24 carbons (C(24)). In Arabidopsis thaliana (Mouse-ear cress), this protein is Long chain acyl-CoA synthetase 1 (LACS1).